A 245-amino-acid polypeptide reads, in one-letter code: Inner membrane protein YgaZ (245 aa).

Over 1–24 (MESPTPQPAPGSATFMEGCKDSLP) the chain is Cytoplasmic. A helical transmembrane segment spans residues 25–45 (IVISYIPVAFAFGLNATRLGF). Residues 46–63 (SPLESVFFSCIIYAGASQ) are Periplasmic-facing. The chain crosses the membrane as a helical span at residues 64-84 (FVITAMLAAGSSLWIAALTVM). The Cytoplasmic portion of the chain corresponds to 85 to 109 (AMDVRHVLYGPSLRSRIIQRLQKSK). The helical transmembrane segment at 110–130 (TALWAFGLTDEVFAAATAKLV) threads the bilayer. Over 131–140 (RNNRRWSENW) the chain is Periplasmic. Residues 141–161 (MIGIAFSSWSSWVFGTVIGAF) traverse the membrane as a helical segment. Residues 162 to 172 (SGSGLLQGYPA) lie on the Cytoplasmic side of the membrane. A helical membrane pass occupies residues 173–193 (VEAALGFMLPALFMSFLLASF). Residues 194–205 (QRKQSLCVTAAL) lie on the Periplasmic side of the membrane. A helical transmembrane segment spans residues 206–226 (VGALAGVTLFSIPVAILAGIV). Residues 227-245 (CGCLTALIQAFWQGAPDEL) are Cytoplasmic-facing.

This sequence belongs to the AzlC family.

The protein resides in the cell inner membrane. This is Inner membrane protein YgaZ (ygaZ) from Escherichia coli (strain K12).